Here is a 352-residue protein sequence, read N- to C-terminus: UDP-N-acetylglucosamine--N-acetylmuramyl-(pentapeptide) pyrophosphoryl-undecaprenol N-acetylglucosamine transferase (352 aa).

UDP-N-acetyl-alpha-D-glucosamine is bound by residues 12–14, Asn124, Arg160, Ser188, and Gln287; that span reads TGG.

It belongs to the glycosyltransferase 28 family. MurG subfamily.

Its subcellular location is the cell inner membrane. It carries out the reaction di-trans,octa-cis-undecaprenyl diphospho-N-acetyl-alpha-D-muramoyl-L-alanyl-D-glutamyl-meso-2,6-diaminopimeloyl-D-alanyl-D-alanine + UDP-N-acetyl-alpha-D-glucosamine = di-trans,octa-cis-undecaprenyl diphospho-[N-acetyl-alpha-D-glucosaminyl-(1-&gt;4)]-N-acetyl-alpha-D-muramoyl-L-alanyl-D-glutamyl-meso-2,6-diaminopimeloyl-D-alanyl-D-alanine + UDP + H(+). It functions in the pathway cell wall biogenesis; peptidoglycan biosynthesis. Cell wall formation. Catalyzes the transfer of a GlcNAc subunit on undecaprenyl-pyrophosphoryl-MurNAc-pentapeptide (lipid intermediate I) to form undecaprenyl-pyrophosphoryl-MurNAc-(pentapeptide)GlcNAc (lipid intermediate II). The chain is UDP-N-acetylglucosamine--N-acetylmuramyl-(pentapeptide) pyrophosphoryl-undecaprenol N-acetylglucosamine transferase from Dechloromonas aromatica (strain RCB).